Here is a 276-residue protein sequence, read N- to C-terminus: Diacetylchitobiose uptake system permease protein DasC (276 aa).

Helical transmembrane passes span 14–34 (TAVVLFIGLVFPVYWMFATAF), 74–94 (LIVTVCAVVFSLVIALAGSFA), 105–125 (GFIVGFMLAQMAPWEVMVIAI), 137–157 (SLVPLTLFYMMMILPFTILTL), 186–206 (VILPLLAPGLMSTSMFGFITA), and 241–261 (GATMAASSLFAIPILILFVYL). Positions 70 to 261 (VSNSLIVTVC…IPILILFVYL (192 aa)) constitute an ABC transmembrane type-1 domain.

This sequence belongs to the binding-protein-dependent transport system permease family. The complex is composed of two ATP-binding proteins (MsiK), two transmembrane proteins (DasB and DasC) and a solute-binding protein (DasA).

Its subcellular location is the cell membrane. Part of the ABC transporter complex DasABC-MsiK involved in N,N'-diacetylchitobiose ((GlcNAc)2) uptake. Responsible for the translocation of the substrate across the membrane. In Streptomyces coelicolor (strain ATCC BAA-471 / A3(2) / M145), this protein is Diacetylchitobiose uptake system permease protein DasC.